Here is a 49-residue protein sequence, read N- to C-terminus: Large ribosomal subunit protein bL33B (49 aa).

It belongs to the bacterial ribosomal protein bL33 family.

This is Large ribosomal subunit protein bL33B from Geobacillus thermodenitrificans (strain NG80-2).